We begin with the raw amino-acid sequence, 324 residues long: Methenyltetrahydromethanopterin cyclohydrolase (324 aa).

The protein belongs to the MCH family.

The protein localises to the cytoplasm. The catalysed reaction is 5,10-methenyl-5,6,7,8-tetrahydromethanopterin + H2O = N(5)-formyl-5,6,7,8-tetrahydromethanopterin + H(+). It participates in one-carbon metabolism; methanogenesis from CO(2); 5,10-methenyl-5,6,7,8-tetrahydromethanopterin from CO(2): step 3/3. Its function is as follows. Catalyzes the reversible interconversion of 5-formyl-H(4)MPT to methenyl-H(4)MPT(+). In Methanococcus aeolicus (strain ATCC BAA-1280 / DSM 17508 / OCM 812 / Nankai-3), this protein is Methenyltetrahydromethanopterin cyclohydrolase.